The primary structure comprises 303 residues: Glycine--tRNA ligase alpha subunit (303 aa).

It belongs to the class-II aminoacyl-tRNA synthetase family. Tetramer of two alpha and two beta subunits.

The protein resides in the cytoplasm. The catalysed reaction is tRNA(Gly) + glycine + ATP = glycyl-tRNA(Gly) + AMP + diphosphate. In Salmonella agona (strain SL483), this protein is Glycine--tRNA ligase alpha subunit.